The chain runs to 129 residues: Ribulose bisphosphate carboxylase small subunit (129 aa).

It belongs to the RuBisCO small chain family. In terms of assembly, heterohexadecamer of 8 large and 8 small subunits.

RuBisCO catalyzes two reactions: the carboxylation of D-ribulose 1,5-bisphosphate, the primary event in carbon dioxide fixation, as well as the oxidative fragmentation of the pentose substrate. Both reactions occur simultaneously and in competition at the same active site. Although the small subunit is not catalytic it is essential for maximal activity. This chain is Ribulose bisphosphate carboxylase small subunit, found in Cereibacter sphaeroides (Rhodobacter sphaeroides).